The primary structure comprises 321 residues: Dolichyl N-acetyl-alpha-D-glucosaminyl phosphate 3-beta-D-2,3-diacetamido-2,3-dideoxy-beta-D-glucuronosyltransferase (321 aa).

The next 2 membrane-spanning stretches (helical) occupy residues 252 to 272 and 290 to 310; these read FGFLFMLLSIIITGLLIFIYI and LYIALPILLFLFHCLISYGFF.

This sequence belongs to the glycosyltransferase 2 family.

The protein localises to the cell membrane. It carries out the reaction an archaeal dolichyl N-acetyl-alpha-D-glucosaminyl phosphate + UDP-2,3-diacetamido-2,3-dideoxy-alpha-D-glucuronate = an archaeal dolichyl 3-O-(2,3-diacetamido-2,3-dideoxy- beta-D-glucuronosyl)-N-acetyl- alpha-D-glucosaminyl phosphate + UDP + H(+). The protein operates within cell surface structure biogenesis; S-layer biogenesis. It functions in the pathway protein modification; protein glycosylation. Its function is as follows. Involved in the assembly of an N-linked disaccharide that decorates the S-layer glycoprotein and flagellins. AglC catalyzes the transfer of 2,3-diacetamido-2,3-dideoxy-alpha-D-glucuronic acid (Glc-2,3-diNAcA) from uridine 5'-diphospho 2,3-diacetamido-2,3-dideoxy-alpha-D-glucuronic acid (UDP-Glc-2,3-diNAcA) to the AglK product Dol-P-GlcNAc to yield Dol-P-GlcNAc-Glc-2,3-diNAcA. AglC is specific for the monophosphate-linked Dol-P-GlcNAc. In Methanococcus voltae, this protein is Dolichyl N-acetyl-alpha-D-glucosaminyl phosphate 3-beta-D-2,3-diacetamido-2,3-dideoxy-beta-D-glucuronosyltransferase.